The chain runs to 352 residues: Phospho-N-acetylmuramoyl-pentapeptide-transferase (352 aa).

Helical transmembrane passes span 10 to 30 (YMFFSYISVRAGFAFFIALFL), 67 to 87 (TMGGLIFIFATIVASLLCADL), 88 to 108 (NNFYVIIGILCLVLFCTIGLV), 129 to 149 (LLSQFIASFICVFFLYIMGIN), 159 to 179 (YALFDGGIFMLALWILVIISS), 191 to 211 (GLATVPSIFSLLSLSAFLYLS), 227 to 247 (GLGELVVLSAALVGALMGFLW), 255 to 275 (VFMGDSGSLSIGAFLGYLGIV), 280 to 300 (ILLLLIGFVFVLETISVILQV), and 329 to 349 (KIIVRFWMIALLANIIALISI).

Belongs to the glycosyltransferase 4 family. MraY subfamily. The cofactor is Mg(2+).

The protein localises to the cell inner membrane. The catalysed reaction is UDP-N-acetyl-alpha-D-muramoyl-L-alanyl-gamma-D-glutamyl-meso-2,6-diaminopimeloyl-D-alanyl-D-alanine + di-trans,octa-cis-undecaprenyl phosphate = di-trans,octa-cis-undecaprenyl diphospho-N-acetyl-alpha-D-muramoyl-L-alanyl-D-glutamyl-meso-2,6-diaminopimeloyl-D-alanyl-D-alanine + UMP. It participates in cell wall biogenesis; peptidoglycan biosynthesis. In terms of biological role, catalyzes the initial step of the lipid cycle reactions in the biosynthesis of the cell wall peptidoglycan: transfers peptidoglycan precursor phospho-MurNAc-pentapeptide from UDP-MurNAc-pentapeptide onto the lipid carrier undecaprenyl phosphate, yielding undecaprenyl-pyrophosphoryl-MurNAc-pentapeptide, known as lipid I. The protein is Phospho-N-acetylmuramoyl-pentapeptide-transferase of Campylobacter lari (strain RM2100 / D67 / ATCC BAA-1060).